Here is a 396-residue protein sequence, read N- to C-terminus: Ornithine aminotransferase (396 aa).

Lys255 carries the post-translational modification N6-(pyridoxal phosphate)lysine.

The protein belongs to the class-III pyridoxal-phosphate-dependent aminotransferase family. OAT subfamily. Requires pyridoxal 5'-phosphate as cofactor.

The protein localises to the cytoplasm. The enzyme catalyses a 2-oxocarboxylate + L-ornithine = L-glutamate 5-semialdehyde + an L-alpha-amino acid. Its pathway is amino-acid biosynthesis; L-proline biosynthesis; L-glutamate 5-semialdehyde from L-ornithine: step 1/1. Functionally, catalyzes the interconversion of ornithine to glutamate semialdehyde. The protein is Ornithine aminotransferase of Staphylococcus epidermidis (strain ATCC 35984 / DSM 28319 / BCRC 17069 / CCUG 31568 / BM 3577 / RP62A).